A 44-amino-acid chain; its full sequence is Somatoliberin (44 aa).

L44 carries the leucine amide modification.

This sequence belongs to the glucagon family.

Its subcellular location is the secreted. Functionally, GRF is released by the hypothalamus and acts on the adenohypophyse to stimulate the secretion of growth hormone. In Capra hircus (Goat), this protein is Somatoliberin (GHRH).